Reading from the N-terminus, the 474-residue chain is MISFCPDCGKSIQAAFKFCPYCGNSLPVEEHVGSQTFVNPHVSSFQGSKRGLNSSFETSPKKVKWSSTVTSPRLSLFSDGDSSESEDTLSSSERSKGSGSRPPTPKSSPQKTRKSPQVTRGSPQKTSCSPQKTRQSPQTLKRSRVTTSLEALPTGTVLTDKSGRQWKLKSFQTRDNQGILYEAAPTSTLTCDSGPQKQKFSLKLDAKDGRLFNEQNFFQRAAKPLQVNKWKKLYSTPLLAIPTCMGFGVHQDKYRFLVLPSLGRSLQSALDVSPKHVLSERSVLQVACRLLDALEFLHENEYVHGNVTAENIFVDPEDQSQVTLAGYGFAFRYCPSGKHVAYVEGSRSPHEGDLEFISMDLHKGCGPSRRSDLQSLGYCMLKWLYGFLPWTNCLPNTEDIMKQKQKFVDKPGPFVGPCGHWIRPSETLQKYLKVVMALTYEEKPPYAMLRNNLEALLQDLRVSPYDPIGLPMVP.

Over residues 41–58 the composition is skewed to polar residues; sequence HVSSFQGSKRGLNSSFET. A disordered region spans residues 41–152; the sequence is HVSSFQGSKR…SRVTTSLEAL (112 aa). Residues 49 to 64 carry the Nuclear localization signal motif; the sequence is KRGLNSSFETSPKKVK. Phosphoserine is present on residues serine 54, serine 55, serine 59, serine 82, serine 83, and serine 90. Low complexity predominate over residues 88 to 101; that stretch reads TLSSSERSKGSGSR. Polar residues predominate over residues 107–149; sequence SSPQKTRKSPQVTRGSPQKTSCSPQKTRQSPQTLKRSRVTTSL. Position 108 is a phosphoserine; by CDK5 (serine 108). A phosphoserine mark is found at serine 115 and serine 122. The 292-residue stretch at 166–457 folds into the Protein kinase domain; that stretch reads WKLKSFQTRD…MLRNNLEALL (292 aa).

It belongs to the protein kinase superfamily. CK1 Ser/Thr protein kinase family. VRK subfamily. Interacts with DUSP3. Interacts with RAN. Interacts with HSP70/HSPA1A. Phosphorylated at Ser-108 by CDK5; leading to protection of the cell against H2O2-induced apoptosis. Post-translationally, ubiquitinated by RNF144A.

The protein localises to the nucleus. It localises to the cytoplasm. The enzyme catalyses L-seryl-[protein] + ATP = O-phospho-L-seryl-[protein] + ADP + H(+). Functionally, plays a role in the regulation of the cell cycle by phosphorylating the nuclear envelope protein barrier-to-autointegration factor/BAF that is required for disassembly and reassembly, respectively, of the nuclear envelope during mitosis. Under normal physiological conditions, negatively regulates ERK activity along with VHR/DUSP3 phosphatase in the nucleus, causing timely and transient action of ERK. Stress conditions activate CDK5 which phosphorylates VRK3 to increase VHR phosphatase activity and suppress prolonged ERK activation that causes cell death. For example, upon glutamate induction, promotes nuclear localization of HSP70/HSPA1A to inhibit ERK activation via VHR/DUSP3 phosphatase. The sequence is that of Serine/threonine-protein kinase VRK3 (VRK3) from Homo sapiens (Human).